Here is a 491-residue protein sequence, read N- to C-terminus: Protein nucleotidyltransferase YdiU (491 aa).

Positions 94, 96, 97, 117, 129, 130, 180, and 187 each coordinate ATP. The active-site Proton acceptor is Asp256. Residues Asn257 and Asp266 each contribute to the Mg(2+) site. Residue Asp266 coordinates ATP.

Belongs to the SELO family. The cofactor is Mg(2+). It depends on Mn(2+) as a cofactor.

It carries out the reaction L-seryl-[protein] + ATP = 3-O-(5'-adenylyl)-L-seryl-[protein] + diphosphate. It catalyses the reaction L-threonyl-[protein] + ATP = 3-O-(5'-adenylyl)-L-threonyl-[protein] + diphosphate. The enzyme catalyses L-tyrosyl-[protein] + ATP = O-(5'-adenylyl)-L-tyrosyl-[protein] + diphosphate. The catalysed reaction is L-histidyl-[protein] + UTP = N(tele)-(5'-uridylyl)-L-histidyl-[protein] + diphosphate. It carries out the reaction L-seryl-[protein] + UTP = O-(5'-uridylyl)-L-seryl-[protein] + diphosphate. It catalyses the reaction L-tyrosyl-[protein] + UTP = O-(5'-uridylyl)-L-tyrosyl-[protein] + diphosphate. Nucleotidyltransferase involved in the post-translational modification of proteins. It can catalyze the addition of adenosine monophosphate (AMP) or uridine monophosphate (UMP) to a protein, resulting in modifications known as AMPylation and UMPylation. The protein is Protein nucleotidyltransferase YdiU of Bacillus cytotoxicus (strain DSM 22905 / CIP 110041 / 391-98 / NVH 391-98).